Consider the following 566-residue polypeptide: Chaperone Ric-8 (566 aa).

Belongs to the synembryn family. As to quaternary structure, interacts with GDP-bound G(i)-alpha protein. Does not interact with G-alpha proteins when they are in complex with subunits beta and gamma. Interacts with Frq2 in a Ca(2+)-independent manner but does not interact with Frq1.

The protein resides in the cytoplasm. Its subcellular location is the cell cortex. It localises to the presynapse. Its function is as follows. Chaperone that specifically binds and folds some, but not all, nascent G alpha proteins prior to G protein heterotrimer formation, promoting their stability and activity. Also acts as a guanine nucleotide exchange factor (GEF) for G alpha proteins by stimulating exchange of bound GDP for free GTP. Plays a key role in asymmetric spindle positioning, a step for asymmetric cell division that generates cell diversity during development by activating G(i) alpha protein independently of G-protein coupled receptors. Required during gastrulation and sensory organ precursor (SOP) formation. Plays a role in positively regulating synapse number and neurotransmitter release. The sequence is that of Chaperone Ric-8 (ric8a) from Drosophila pseudoobscura pseudoobscura (Fruit fly).